Reading from the N-terminus, the 144-residue chain is MINSILVVCIGNICRSPTGERLLKAALPERKIASAGLKAMVGGSADETASIVANEHGVSLQDHVAQQLTADMCRDSDLILVMEKKHIDLVCRINPSVRGKTMLFGHWINQQEIADPYKKSRDAFEAVYGVLENAAQKWVNALSR.

Catalysis depends on Cys9, which acts as the Nucleophile. The active site involves Arg15. Residue Asp115 is the Proton donor of the active site.

It belongs to the low molecular weight phosphotyrosine protein phosphatase family.

It catalyses the reaction O-phospho-L-tyrosyl-[protein] + H2O = L-tyrosyl-[protein] + phosphate. In terms of biological role, may function as a phosphatase required for amylovoran (an exopolysaccharide that functions as a virulence factor) production. In Erwinia amylovora (Fire blight bacteria), this protein is Probable low molecular weight protein-tyrosine-phosphatase AmsI (amsI).